Consider the following 156-residue polypeptide: MSRRNAAVKRPVLPDPQFNNRLATMLVARLMKHGKKSTAQRILSDAFSLIGERTGGDPIELFETAVKNATPLVEVRARRVGGATYQVPMEVRQERGTAMALRWLVSFSRARNGRSMAQKLAGELMDAANEAGSAVRKREETHKMAEANKAFAHYRY.

This sequence belongs to the universal ribosomal protein uS7 family. As to quaternary structure, part of the 30S ribosomal subunit. Contacts proteins S9 and S11.

One of the primary rRNA binding proteins, it binds directly to 16S rRNA where it nucleates assembly of the head domain of the 30S subunit. Is located at the subunit interface close to the decoding center, probably blocks exit of the E-site tRNA. This chain is Small ribosomal subunit protein uS7, found in Synechococcus sp. (strain WH7803).